Consider the following 167-residue polypeptide: SAR-endolysin (167 aa).

Residues 11–31 traverse the membrane as a helical; Signal-anchor for type II membrane protein segment; sequence VIAAISGGAIAIASVLITGPG. Active-site proton donor/acceptor residues include Glu-37 and Asp-46.

This sequence belongs to the glycosyl hydrolase 24 family.

It localises to the host cell inner membrane. The enzyme catalyses Hydrolysis of (1-&gt;4)-beta-linkages between N-acetylmuramic acid and N-acetyl-D-glucosamine residues in a peptidoglycan and between N-acetyl-D-glucosamine residues in chitodextrins.. Functionally, signal-arrest-release (SAR) endolysin with lysozyme activity that degrades host peptidoglycans and participates with the pinholin and spanin proteins in the sequential events which lead to programmed host cell lysis releasing the mature viral particles. Once the pinholin has permeabilized the host cell membrane, the SAR-endolysin is released into the periplasm where it breaks down the peptidoglycan layer. In Bacteriophage PS34, this protein is SAR-endolysin (19).